A 993-amino-acid polypeptide reads, in one-letter code: DNA-binding protein SMUBP-2 (993 aa).

Ala-2 is modified (N-acetylalanine). Residues 214 to 221 (GPPGTGKT), Gln-403, Tyr-442, and Glu-571 contribute to the ATP site. Positions 638-785 (TAFEYLDDIV…KRRFITVSKR (148 aa)) are SS DNA-binding. 3 disordered regions span residues 651–723 (YSHE…VESQ), 782–828 (VSKR…PDQP), and 841–879 (VRSA…DLPT). Polar residues-rich tracts occupy residues 653-662 (HENSQGSSHA) and 669-681 (PATS…QRQE). One can recognise an R3H domain in the interval 723–786 (QDGVDHFRAM…RRFITVSKRA (64 aa)). Residues 818–828 (PPREQRGPDQP) show a composition bias toward basic and acidic residues. A compositionally biased stretch (polar residues) spans 842–859 (RSAQGQPASKEQQASGQQ). Residues 864-868 (KKKKK) carry the Nuclear localization signal motif. The AN1-type zinc finger occupies 891 to 940 (VKADNTCGFAKCTAGVTTLGQFCQLCSRRYCLSHHLPEIHGCGERARAHA). Residues Cys-897, Cys-902, Cys-913, Cys-916, Cys-921, His-924, His-930, and Cys-932 each coordinate Zn(2+). The interval 971-993 (RRLDKKLSELSNQRTSRRKERGT) is disordered.

The protein belongs to the DNA2/NAM7 helicase family. As to quaternary structure, homooligomer. Interacts with RUVBL1. Interacts with RUVBL2. Interacts with GTF3C1. Interacts with ABT1. Interacts with ribosomes. Expressed in all tissues examined. Expressed in the developing and adult human brain, with highest expression in the cerebellum. Moderately expressed in fibroblasts.

It is found in the nucleus. The protein resides in the cytoplasm. Its subcellular location is the cell projection. It localises to the axon. It carries out the reaction ATP + H2O = ADP + phosphate + H(+). Functionally, 5' to 3' helicase that unwinds RNA and DNA duplexes in an ATP-dependent reaction. Specific to 5'-phosphorylated single-stranded guanine-rich sequences. May play a role in RNA metabolism, ribosome biogenesis or initiation of translation. May play a role in regulation of transcription. Interacts with tRNA-Tyr. This chain is DNA-binding protein SMUBP-2 (IGHMBP2), found in Homo sapiens (Human).